A 617-amino-acid polypeptide reads, in one-letter code: Proline--tRNA ligase (617 aa).

This sequence belongs to the class-II aminoacyl-tRNA synthetase family. ProS type 1 subfamily. In terms of assembly, homodimer.

It localises to the cytoplasm. The enzyme catalyses tRNA(Pro) + L-proline + ATP = L-prolyl-tRNA(Pro) + AMP + diphosphate. In terms of biological role, catalyzes the attachment of proline to tRNA(Pro) in a two-step reaction: proline is first activated by ATP to form Pro-AMP and then transferred to the acceptor end of tRNA(Pro). As ProRS can inadvertently accommodate and process non-cognate amino acids such as alanine and cysteine, to avoid such errors it has two additional distinct editing activities against alanine. One activity is designated as 'pretransfer' editing and involves the tRNA(Pro)-independent hydrolysis of activated Ala-AMP. The other activity is designated 'posttransfer' editing and involves deacylation of mischarged Ala-tRNA(Pro). The misacylated Cys-tRNA(Pro) is not edited by ProRS. The protein is Proline--tRNA ligase of Streptococcus pneumoniae serotype 4 (strain ATCC BAA-334 / TIGR4).